The sequence spans 339 residues: Protein RecA (339 aa).

74 to 81 (GPESSGKT) contacts ATP.

The protein belongs to the RecA family.

Its subcellular location is the cytoplasm. Functionally, can catalyze the hydrolysis of ATP in the presence of single-stranded DNA, the ATP-dependent uptake of single-stranded DNA by duplex DNA, and the ATP-dependent hybridization of homologous single-stranded DNAs. It interacts with LexA causing its activation and leading to its autocatalytic cleavage. The protein is Protein RecA of Phytoplasma mali (strain AT).